The chain runs to 46 residues: Apamin (46 aa).

Residues 1-27 (MISMLRCISLFLSVILITGYFVTPVMS) form the signal peptide. Disulfide bonds link cysteine 28/cysteine 38 and cysteine 30/cysteine 42. The essential for toxin activity stretch occupies residues 40–41 (RR). Histidine 45 is subject to Histidine amide.

Expressed by the venom gland.

It is found in the secreted. Functionally, neurotoxin that blocks voltage-independent calcium-activated potassium channels (KCNN1=SK1, KCNN2=SK2, KCNN3=SK3). The polypeptide is Apamin (Apis cerana cerana (Oriental honeybee)).